Here is a 160-residue protein sequence, read N- to C-terminus: Nucleotide-binding protein CbuK_1936 (160 aa).

This sequence belongs to the YajQ family.

Nucleotide-binding protein. The sequence is that of Nucleotide-binding protein CbuK_1936 from Coxiella burnetii (strain CbuK_Q154) (Coxiella burnetii (strain Q154)).